The primary structure comprises 280 residues: Large ribosomal subunit protein uL2 (280 aa).

Disordered regions lie at residues 32–54 (SLLV…SRHM) and 221–280 (RGMA…DSKK). Positions 37-49 (NKSTGGRNNNGRV) are enriched in polar residues. Residues 232 to 242 (MGGGEGKSKSG) show a composition bias toward gly residues. Residues 257–280 (KGLKTRKRKKASSKLIVRRRDSKK) are compositionally biased toward basic residues.

This sequence belongs to the universal ribosomal protein uL2 family. As to quaternary structure, part of the 50S ribosomal subunit. Forms a bridge to the 30S subunit in the 70S ribosome.

Functionally, one of the primary rRNA binding proteins. Required for association of the 30S and 50S subunits to form the 70S ribosome, for tRNA binding and peptide bond formation. It has been suggested to have peptidyltransferase activity; this is somewhat controversial. Makes several contacts with the 16S rRNA in the 70S ribosome. This is Large ribosomal subunit protein uL2 from Chloroherpeton thalassium (strain ATCC 35110 / GB-78).